Consider the following 337-residue polypeptide: Angiopoietin-related protein 7 (337 aa).

Positions 1 to 21 are cleaved as a signal peptide; the sequence is MLRETWLCVILVAFVSHPVWL. A coiled-coil region spans residues 30 to 110; the sequence is QLKAAGCCEE…DIMQLQAAQT (81 aa). A glycan (N-linked (GlcNAc...) asparagine) is linked at N49. The Fibrinogen C-terminal domain occupies 113–334; it reads QTSADAIYDC…RVEMKIRPEA (222 aa). Residues C122 and C153 are joined by a disulfide bond. N-linked (GlcNAc...) asparagine glycans are attached at residues N244 and N258. C276 and C289 form a disulfide bridge. N320 carries an N-linked (GlcNAc...) asparagine glycan.

Homotetramer; disulfide-linked.

It is found in the secreted. Functionally, has a role in the formation and organization of the extracellular matrix. In the eye, it functions as a mediator of dexamethasone-induced matrix deposition in the trabecular meshwork, the tissue responsible for the outflow of the ocular aqueous humor and for the maintenance of intraocular pressure. Is a negative regulator of angiogenesis in the cornea, and plays a major role in maintaining corneal avascularity and transparency. This Mus musculus (Mouse) protein is Angiopoietin-related protein 7 (Angptl7).